The primary structure comprises 481 residues: UDP-glucose 6-dehydrogenase 1 (481 aa).

NAD(+) contacts are provided by residues 8–13 (GAGYVG), D33, R38, 86–90 (VNTPT), 127–128 (ST), and E161. Substrate contacts are provided by residues 157 to 161 (EFLAE), 216 to 223 (KLAANAFL), and 256 to 269 (RIGPKFLNASVGFG). C272 (nucleophile) is an active-site residue. 272–275 (CFQK) is a binding site for NAD(+). 334–335 (FK) lines the substrate pocket. R342 is a binding site for NAD(+). R448 is a binding site for substrate.

The protein belongs to the UDP-glucose/GDP-mannose dehydrogenase family.

It catalyses the reaction UDP-alpha-D-glucose + 2 NAD(+) + H2O = UDP-alpha-D-glucuronate + 2 NADH + 3 H(+). It functions in the pathway nucleotide-sugar biosynthesis; UDP-alpha-D-glucuronate biosynthesis; UDP-alpha-D-glucuronate from UDP-alpha-D-glucose: step 1/1. With respect to regulation, inhibited by UDP-xylose. In terms of biological role, involved in the biosynthesis of UDP-glucuronic acid (UDP-GlcA), providing nucleotide sugars for cell-wall polymers. The sequence is that of UDP-glucose 6-dehydrogenase 1 (UGD1) from Arabidopsis thaliana (Mouse-ear cress).